Reading from the N-terminus, the 194-residue chain is Chitin synthase 2 (194 aa).

The protein belongs to the chitin synthase family. Class III subfamily.

The protein resides in the cell membrane. The enzyme catalyses [(1-&gt;4)-N-acetyl-beta-D-glucosaminyl](n) + UDP-N-acetyl-alpha-D-glucosamine = [(1-&gt;4)-N-acetyl-beta-D-glucosaminyl](n+1) + UDP + H(+). Functionally, polymerizes chitin, a structural polymer of the cell wall and septum, by transferring the sugar moiety of UDP-GlcNAc to the non-reducing end of the growing chitin polymer. This Ajellomyces capsulatus (Darling's disease fungus) protein is Chitin synthase 2 (CHS2).